Consider the following 142-residue polypeptide: Gonadotropin subunit beta-2 (142 aa).

The N-terminal stretch at 1–23 is a signal peptide; the sequence is MLGLHVGTLISLFLCILLEPVEG. 6 disulfides stabilise this stretch: Cys29/Cys77, Cys43/Cys92, Cys46/Cys130, Cys54/Cys108, Cys58/Cys110, and Cys113/Cys120. Asn33 carries N-linked (GlcNAc...) asparagine glycosylation.

The protein belongs to the glycoprotein hormones subunit beta family. As to quaternary structure, heterodimer of an alpha and a beta chain.

It localises to the secreted. Functionally, involved in gametogenesis and steroidogenesis. This is Gonadotropin subunit beta-2 (cgbb) from Oncorhynchus keta (Chum salmon).